A 192-amino-acid chain; its full sequence is Signal peptidase complex catalytic subunit sec11 (192 aa).

The Cytoplasmic segment spans residues 1-18 (MLSFLSSNLSSTRQSMAQ). The chain crosses the membrane as a helical; Signal-anchor for type II membrane protein span at residues 19 to 39 (VLNFALVLSTAFMLWKGLSVF). At 40-192 (TASSSPIVVV…GLMVILQREQ (153 aa)) the chain is on the lumenal side. Catalysis depends on charge relay system residues S53, H92, and D133. Positions 177–188 (VLLGIMGLMVIL) are C-terminal short (CTS) helix.

The protein belongs to the peptidase S26B family. Component of the signal peptidase complex (SPC) composed of a catalytic subunit SEC11 and three accessory subunits SPC1, SPC2 and SPC3. The complex induces a local thinning of the ER membrane which is used to measure the length of the signal peptide (SP) h-region of protein substrates. This ensures the selectivity of the complex towards h-regions shorter than 18-20 amino acids. SPC associates with the translocon complex.

The protein resides in the endoplasmic reticulum membrane. The catalysed reaction is Cleavage of hydrophobic, N-terminal signal or leader sequences from secreted and periplasmic proteins.. In terms of biological role, catalytic component of the signal peptidase complex (SPC) which catalyzes the cleavage of N-terminal signal sequences from nascent proteins as they are translocated into the lumen of the endoplasmic reticulum. Specifically cleaves N-terminal signal peptides that contain a hydrophobic alpha-helix (h-region) shorter than 18-20 amino acids. The sequence is that of Signal peptidase complex catalytic subunit sec11 (sec11) from Aspergillus fumigatus (strain CBS 144.89 / FGSC A1163 / CEA10) (Neosartorya fumigata).